Reading from the N-terminus, the 675-residue chain is Potassium-transporting ATPase ATP-binding subunit (675 aa).

The next 4 helical transmembrane spans lie at 34–54 (IMFVVEVGMILTLILICFPDI), 65–85 (LITIFIILLITILFANFSEAF), 216–236 (IALFTLLTTLTIIFLVVIVTL), and 245–265 (LILPIAMLIALTVCLIPTTIG). D304 functions as the 4-aspartylphosphate intermediate in the catalytic mechanism. ATP-binding positions include D341, E345, 372-379 (FTAETRMS), and K390. 2 residues coordinate Mg(2+): D513 and D517. 3 helical membrane passes run 569–591 (ALTTFSLANDVAKYFAILPALMM), 611–631 (AIISALIFNALIIVALIPIAM), and 644–664 (IFINNMLIYGLGGLIVPFLGI).

It belongs to the cation transport ATPase (P-type) (TC 3.A.3) family. Type IA subfamily. In terms of assembly, the system is composed of three essential subunits: KdpA, KdpB and KdpC.

The protein resides in the cell membrane. It catalyses the reaction K(+)(out) + ATP + H2O = K(+)(in) + ADP + phosphate + H(+). Part of the high-affinity ATP-driven potassium transport (or Kdp) system, which catalyzes the hydrolysis of ATP coupled with the electrogenic transport of potassium into the cytoplasm. This subunit is responsible for energy coupling to the transport system and for the release of the potassium ions to the cytoplasm. The polypeptide is Potassium-transporting ATPase ATP-binding subunit (Staphylococcus aureus (strain MSSA476)).